Reading from the N-terminus, the 504-residue chain is U3 snoRNP-associated protein-like YAO (504 aa).

The disordered stretch occupies residues 1–120 (MKYNNEKKKG…DDDDDEDDDE (120 aa)). The segment covering 20–33 (GSNERDPFFEEEPK) has biased composition (basic and acidic residues). 2 stretches are compositionally biased toward acidic residues: residues 41–54 (DDDD…DAEE) and 70–81 (EVEDEDEFADET). The segment covering 89–106 (LAEEMLNRRREAMRRERE) has biased composition (basic and acidic residues). Positions 107-120 (EADNDDDDDEDDDE) are enriched in acidic residues. WD repeat units lie at residues 159–198 (KHRR…TDKY), 220–259 (NHSR…HVQA), 262–301 (GHRN…FITE), 304–342 (GHQG…RMIY), 344–382 (APAS…PVFV), 413–452 (SANS…IRPL), and 456–496 (PLTG…QNGV).

Belongs to the WD repeat RRP9 family. As to expression, expressed in tissues with active in cell division such as shoot apexes, root tips, lateral root primordia, embryos, endosperm, pollen grains and embryo sacs.

The protein localises to the nucleus. Its subcellular location is the nucleolus. Component of a nucleolar small nuclear ribonucleoprotein particle (snoRNP) thought to participate in the processing and modification of pre-ribosomal RNA. Essential for embryogenesis. Plays a critical role in embryo sac development and gametic cell fate. Required for the correct positioning of the first division plane of zygote. May function during early embryogenesis. This chain is U3 snoRNP-associated protein-like YAO, found in Arabidopsis thaliana (Mouse-ear cress).